Reading from the N-terminus, the 410-residue chain is Lipid droplet-regulating VLDL assembly factor AUP1 (410 aa).

Met-1 is subject to N-acetylmethionine. The Cytoplasmic segment spans residues 1-20; that stretch reads MEPPPAPGPERLFDSHRLPS. The stretch at 21 to 41 is an intramembrane region; the sequence is DGFLLLALLLYAPVGLCLLVL. Residues 42-410 lie on the Cytoplasmic side of the membrane; sequence RLFLGLHVFL…FRERQAQEAE (369 aa). A disordered region spans residues 259–293; the sequence is LTPADKAEHMKRQRHPRLRPQSVQSSFPSPPSPSS. Phosphoserine is present on Ser-292. The CUE domain maps to 296–338; the sequence is QLTILAQRVKEVLPHVPLNVIQRDLARTGCVDLTITNLLEGAV. Residues 348-367 form a disordered region; the sequence is GSQSLPTASAPKFPSSGLVT. A Phosphoserine modification is found at Ser-363. The residue at position 367 (Thr-367) is a Phosphothreonine.

This sequence belongs to the AUP1 family. As to quaternary structure, identified in a complex that contains SEL1L, OS9, FAF2/UBXD8, UBE2J1/UBC6E and AUP1. Interacts with the cytoplasmic tail of ITGA2B, ITGA1, ITGA2, ITGA5, ITGAV and ITGAM. Interacts (via C-terminus) with UBE2G2; the interaction recruits UBE2G2 to lipid droplets. Interacts with ubiquitin ligases AMFR/gp78 and RNF139/TRC8; this promotes interaction of UBE2G2 with AMFR and RNF139. Interacts with apolipoprotein APOB. In terms of processing, monoubiquitinated and diubiquitinated.

The protein localises to the endoplasmic reticulum membrane. The protein resides in the lipid droplet. Plays a role in the translocation of terminally misfolded proteins from the endoplasmic reticulum lumen to the cytoplasm and their degradation by the proteasome. Plays a role in lipid droplet formation. Induces lipid droplet clustering. Recruits ubiquitin-conjugating enzyme UBE2G2 to lipid droplets which facilitates its interaction with ubiquitin ligases AMFR/gp78 and RNF139/TRC8, leading to sterol-induced ubiquitination of HMGCR and its subsequent proteasomal degradation. Also required for the degradation of INSIG1, SREBF1 and SREBF2. Plays a role in regulating assembly and secretion of very low density lipoprotein particles and stability of apolipoprotein APOB. This Rattus norvegicus (Rat) protein is Lipid droplet-regulating VLDL assembly factor AUP1.